A 619-amino-acid chain; its full sequence is Putative zinc metalloprotease CT_072 (619 aa).

A Zn(2+)-binding site is contributed by histidine 20. The active site involves glutamate 21. Histidine 24 is a Zn(2+) binding site. Transmembrane regions (helical) follow at residues 103–125, 558–580, and 593–610; these read IFVL…GILY, VLNL…WEIL, and ALVP…FLTL.

Belongs to the peptidase M50B family. It depends on Zn(2+) as a cofactor.

It is found in the cell inner membrane. The polypeptide is Putative zinc metalloprotease CT_072 (Chlamydia trachomatis serovar D (strain ATCC VR-885 / DSM 19411 / UW-3/Cx)).